We begin with the raw amino-acid sequence, 255 residues long: Ribosomal RNA small subunit methyltransferase A (255 aa).

Residues Asn-13, Leu-15, Gly-40, Glu-61, Asp-85, and Asn-103 each coordinate S-adenosyl-L-methionine.

This sequence belongs to the class I-like SAM-binding methyltransferase superfamily. rRNA adenine N(6)-methyltransferase family. RsmA subfamily.

Its subcellular location is the cytoplasm. The enzyme catalyses adenosine(1518)/adenosine(1519) in 16S rRNA + 4 S-adenosyl-L-methionine = N(6)-dimethyladenosine(1518)/N(6)-dimethyladenosine(1519) in 16S rRNA + 4 S-adenosyl-L-homocysteine + 4 H(+). Functionally, specifically dimethylates two adjacent adenosines (A1518 and A1519) in the loop of a conserved hairpin near the 3'-end of 16S rRNA in the 30S particle. May play a critical role in biogenesis of 30S subunits. This chain is Ribosomal RNA small subunit methyltransferase A, found in Dechloromonas aromatica (strain RCB).